A 457-amino-acid polypeptide reads, in one-letter code: Adenylosuccinate synthetase isozyme 1 (457 aa).

The segment at 1-24 is disordered; the sequence is MSGTRASNDRPPGTGGVKRGRLQQ. GTP is bound by residues 42–48 and 70–72; these read GDEGKGK and GHT. Asp-43 functions as the Proton acceptor in the catalytic mechanism. Asp-43 and Gly-70 together coordinate Mg(2+). A substrate-binding site is contributed by Asp-43. IMP is bound by residues 43 to 46, 68 to 71, Thr-163, Arg-177, Asn-256, Thr-271, and Arg-335; these read DEGK and NAGH. Residue His-71 is the Proton donor of the active site. 331 to 337 contributes to the substrate binding site; sequence VTTGRKR. Residues Arg-337, 363 to 365, and 445 to 448 contribute to the GTP site; these read KLD and GVGK.

It belongs to the adenylosuccinate synthetase family. In terms of assembly, homodimer. It depends on Mg(2+) as a cofactor. In terms of tissue distribution, high levels in muscle.

It localises to the cytoplasm. Its subcellular location is the membrane. It carries out the reaction IMP + L-aspartate + GTP = N(6)-(1,2-dicarboxyethyl)-AMP + GDP + phosphate + 2 H(+). The protein operates within purine metabolism; AMP biosynthesis via de novo pathway; AMP from IMP: step 1/2. Its activity is regulated as follows. Weakly inhibited by AMP non-competitively to all substrates. Inhibited by IMP non-competitively with respect to GTP. Inhibited by fructose 1,6-bisphosphate competitively with respect to IMP. In terms of biological role, component of the purine nucleotide cycle (PNC), which interconverts IMP and AMP to regulate the nucleotide levels in various tissues, and which contributes to glycolysis and ammoniagenesis. Catalyzes the first committed step in the biosynthesis of AMP from IMP. The sequence is that of Adenylosuccinate synthetase isozyme 1 (Adss1) from Mus musculus (Mouse).